A 120-amino-acid chain; its full sequence is Aspartate 1-decarboxylase (120 aa).

The active-site Schiff-base intermediate with substrate; via pyruvic acid is S25. At S25 the chain carries Pyruvic acid (Ser). T57 lines the substrate pocket. Y58 functions as the Proton donor in the catalytic mechanism. 73–75 (GAA) is a binding site for substrate.

Belongs to the PanD family. In terms of assembly, heterooctamer of four alpha and four beta subunits. Requires pyruvate as cofactor. Post-translationally, is synthesized initially as an inactive proenzyme, which is activated by self-cleavage at a specific serine bond to produce a beta-subunit with a hydroxyl group at its C-terminus and an alpha-subunit with a pyruvoyl group at its N-terminus.

The protein localises to the cytoplasm. It catalyses the reaction L-aspartate + H(+) = beta-alanine + CO2. It participates in cofactor biosynthesis; (R)-pantothenate biosynthesis; beta-alanine from L-aspartate: step 1/1. Catalyzes the pyruvoyl-dependent decarboxylation of aspartate to produce beta-alanine. This chain is Aspartate 1-decarboxylase, found in Deinococcus radiodurans (strain ATCC 13939 / DSM 20539 / JCM 16871 / CCUG 27074 / LMG 4051 / NBRC 15346 / NCIMB 9279 / VKM B-1422 / R1).